The sequence spans 93 residues: Regulatory protein RepI (93 aa).

This protein is involved in regulating the plasmid copy-number. Increasing the level of this protein results in a higher plasmid copy-number. This Escherichia coli protein is Regulatory protein RepI (repI).